The primary structure comprises 1835 residues: AT-rich interactive domain-containing protein 2 (1835 aa).

Ala2 bears the N-acetylalanine mark. Position 4 is a phosphoserine (Ser4). Glycyl lysine isopeptide (Lys-Gly) (interchain with G-Cter in SUMO2) cross-links involve residues Lys7, Lys15, and Lys119. Residues 13 to 105 form the ARID domain; sequence RRKGLAFLDE…YLEKYEKVHH (93 aa). Residues 313 to 317 carry the LXXLL motif; sequence LRFLL. Positions 524 to 603 form a DNA-binding region, RFX-type winged-helix; that stretch reads ACQWLNAHFE…IHVVGVKRRA (80 aa). Lys555 is covalently cross-linked (Glycyl lysine isopeptide (Lys-Gly) (interchain with G-Cter in SUMO2)). Phosphoserine is present on residues Ser631 and Ser635. Thr653 carries the post-translational modification Phosphothreonine. Phosphoserine is present on Ser689. Thr692 carries the phosphothreonine modification. Disordered regions lie at residues 819-844, 962-1057, 1266-1287, 1295-1314, and 1321-1341; these read QQLI…QSQD, LTGQ…SGES, MENP…KENE, NGRK…KIQS, and LISN…KQNS. 3 stretches are compositionally biased toward low complexity: residues 823 to 843, 985 to 996, and 1025 to 1044; these read TTSP…SQSQ, PTAMSSSSTPQS, and QVQV…QPQQ. The residue at position 1300 (Ser1300) is a Phosphoserine. A compositionally biased stretch (polar residues) spans 1301 to 1314; the sequence is DSSLPPSNSGKIQS. 2 positions are modified to phosphoserine: Ser1391 and Ser1496. Disordered regions lie at residues 1488–1522 and 1572–1629; these read DSGS…AEDT and SAVQ…RKPG. Positions 1491–1509 are enriched in polar residues; it reads SKVSHSPALSSDVRSTNGT. Positions 1513–1522 are enriched in basic and acidic residues; that stretch reads KTVKRPAEDT. A compositionally biased stretch (polar residues) spans 1573–1592; it reads AVQQKQQHPPTYVQNVVPQN. Residues 1602 to 1623 are compositionally biased toward low complexity; the sequence is QVQGQPNSSQPSPFSGSSQPGD. The C2H2-type zinc-finger motif lies at 1632–1657; that stretch reads FMCLWQSCKKWFQTPSQVFYHAATEH. Glycyl lysine isopeptide (Lys-Gly) (interchain with G-Cter in SUMO2) cross-links involve residues Lys1701, Lys1716, and Lys1731. Positions 1703-1728 are disordered; that stretch reads DEPGQAGSQKSSTKQPTVGGTSSTPR. Over residues 1708–1728 the composition is skewed to polar residues; sequence AGSQKSSTKQPTVGGTSSTPR.

Component of the SWI/SNF-B (PBAF) chromatin remodeling complex, at least composed of SMARCA4/BRG1, SMARCB1/BAF47/SNF5, ACTL6A/BAF53A or ACTL6B/BAF53B, SMARCE1/BAF57, SMARCD1/BAF60A, SMARCD2/BAF60B, perhaps SMARCD3/BAF60C, SMARCC1/BAF155, SMARCC2/BAF170, PBRM1/BAF180, ARID2/BAF200 and actin. Interacts with SRF. Forms complexes with SRF and SRF cofactors MYOCD, NKX2-5 and SRFBP1. As to expression, highly expressed in heart.

Its subcellular location is the nucleus. Its function is as follows. Involved in transcriptional activation and repression of select genes by chromatin remodeling (alteration of DNA-nucleosome topology). Required for the stability of the SWI/SNF chromatin remodeling complex SWI/SNF-B (PBAF). May be involved in targeting the complex to different genes. May be involved in regulating transcriptional activation of cardiac genes. This is AT-rich interactive domain-containing protein 2 from Homo sapiens (Human).